Reading from the N-terminus, the 442-residue chain is tRNA-2-methylthio-N(6)-dimethylallyladenosine synthase (442 aa).

The region spanning 5 to 122 (KRIFIKTFGC…LPDMIESKRR (118 aa)) is the MTTase N-terminal domain. Residues C14, C51, C85, C159, C163, and C166 each coordinate [4Fe-4S] cluster. The Radical SAM core domain occupies 145–377 (RVEGAAAFLS…QALNEAQGKA (233 aa)). The region spanning 380–442 (ASMVGSIQRV…LSHTLRGELV (63 aa)) is the TRAM domain.

This sequence belongs to the methylthiotransferase family. MiaB subfamily. In terms of assembly, monomer. [4Fe-4S] cluster serves as cofactor.

It localises to the cytoplasm. It catalyses the reaction N(6)-dimethylallyladenosine(37) in tRNA + (sulfur carrier)-SH + AH2 + 2 S-adenosyl-L-methionine = 2-methylsulfanyl-N(6)-dimethylallyladenosine(37) in tRNA + (sulfur carrier)-H + 5'-deoxyadenosine + L-methionine + A + S-adenosyl-L-homocysteine + 2 H(+). Its function is as follows. Catalyzes the methylthiolation of N6-(dimethylallyl)adenosine (i(6)A), leading to the formation of 2-methylthio-N6-(dimethylallyl)adenosine (ms(2)i(6)A) at position 37 in tRNAs that read codons beginning with uridine. This chain is tRNA-2-methylthio-N(6)-dimethylallyladenosine synthase, found in Methylobacillus flagellatus (strain ATCC 51484 / DSM 6875 / VKM B-1610 / KT).